The sequence spans 429 residues: MDMQTGSRFFTDRLADSDPDLFQAIRSELTRQQDQIELIASENIVSQAVLEAQGSVLTNKYAEGYAGRRYYGGCEYVDIAETLAIERAKALFGCAYANVQPHSGAQANQAVFMALLQPGDTFMGMDLAAGGHLTHGAPANQSGKWFKVVSYGVRRDDHLIDYEEVEAKAREHRPKLIIAGGSAYPRQIDFARFRRIADEIGAYLMVDMAHYAGLVAAGVYPSPLPHAHVVTTTTHKTLRGPRGGMILSNDPELGKKFNSAVFPGLQGGPLMHVIAAKAVAFGEALRPEFKAYAQAVVDNARVLADRLVAGGLDIVSGGTDSHIVLVDLRPKRLTGKAAEATLEHAGMTCNKNGVPFDPEKPLVTSGVRLGSPAATTRGFGTAEFAQVGDLIVEVLDGLARSNGDNTATETRVREQVRALCHRFPIYPAL.

(6S)-5,6,7,8-tetrahydrofolate contacts are provided by residues leucine 127 and 131-133 (GHL). Lysine 236 carries the post-translational modification N6-(pyridoxal phosphate)lysine. A (6S)-5,6,7,8-tetrahydrofolate-binding site is contributed by glutamate 252.

The protein belongs to the SHMT family. As to quaternary structure, homodimer. Pyridoxal 5'-phosphate is required as a cofactor.

The protein localises to the cytoplasm. It catalyses the reaction (6R)-5,10-methylene-5,6,7,8-tetrahydrofolate + glycine + H2O = (6S)-5,6,7,8-tetrahydrofolate + L-serine. It functions in the pathway one-carbon metabolism; tetrahydrofolate interconversion. It participates in amino-acid biosynthesis; glycine biosynthesis; glycine from L-serine: step 1/1. Its function is as follows. Catalyzes the reversible interconversion of serine and glycine with tetrahydrofolate (THF) serving as the one-carbon carrier. This reaction serves as the major source of one-carbon groups required for the biosynthesis of purines, thymidylate, methionine, and other important biomolecules. Also exhibits THF-independent aldolase activity toward beta-hydroxyamino acids, producing glycine and aldehydes, via a retro-aldol mechanism. This is Serine hydroxymethyltransferase from Rhodospirillum centenum (strain ATCC 51521 / SW).